The primary structure comprises 290 residues: Glycine--tRNA ligase alpha subunit (290 aa).

This sequence belongs to the class-II aminoacyl-tRNA synthetase family. Tetramer of two alpha and two beta subunits.

The protein localises to the cytoplasm. The enzyme catalyses tRNA(Gly) + glycine + ATP = glycyl-tRNA(Gly) + AMP + diphosphate. This is Glycine--tRNA ligase alpha subunit from Nitratiruptor sp. (strain SB155-2).